The sequence spans 1012 residues: MHWGLCPRGPGAAAVAAAGSFWGPARLPSRLGCLGMTRRLVVRSVAGADSPQSSSKGGRYRDTVLLPQTSFPMKLLGRQQSDMELEIQQKCGFSELYSWQRERKVKTEFCLHDGPPYANGDPHVGHALNKILKDIANRFHMMRGSKVHFVPGWDCHGLPIETKVLSELGVDAQSLSAMEIREKARSFAQAAIEKQKSAFVRWGVMADWNNCYYTFDPKYEAKQLRVFYQMYEKGLVYRSYKPVYWSPSSRTALAEAELEYNPEHVSRSIYVRFPLLRPPPKLESLTDASSPVSVLVWTTQPWTIPANQAICYMPEAKYAVVKCSASGHLYILAEDKIAPVASALETTFDVVAAFSGVDLEGGTCSHPLTPDKVSPLLPATHVTMAKGTGLVHTAPAHGMEDYSVASQHSLPMDCLVDEGGMFTDAAGPELQNKAVLKEGTDVVIKMLQATKNVLKEENIVHSYPCDWRTKTPVLIRASKQWFVNITDIKAAAKESLKTVKFIPGAALNSMTDMLDRRPYWCISRQRVWGVPIPVFHHKTKDEYLINSQTTEHIIKLVEQHGSDVWWTLPAEQLLPAEVLAQAGGPGALEYAPGQDILDIWFDSGTSWSCVLQDTQQRADLYLEGKDQLGGWFQSSLLTSVATRSKAPFRTVMVHGFTLGEKGEKMSKSLGNVINPDTIISGGKDHSKEPPYGADILRWWIAESNVFTEVTIGPSVLSAARDDISKLRNTLRFLLGNLTGFNPETDSVPVKNMYVIDQYMLHLIQDFATKITDSYKQYDFGKVVRLLKAFYTRELSSFYFSIVKDRLYCENEKDPKRRSCQTALAEILDVLVRAFAPILPHLAEEVFQHIPYVTEPKSVFRTGWINTSSIWKKPGLEEAVESACAMRDSFLGSIPGKNAAEYEVIIVIEPGLLFEIMEMLQAEETSSTSQLNELMMASQTTLLAQEPRERTAGDIELTGTFVINLEGGDIREESSYKVIVVPTAREKCPRCWKHTSETADALCPRCAEVIGAK.

A mitochondrion-targeting transit peptide spans 1 to 48 (MHWGLCPRGPGAAAVAAAGSFWGPARLPSRLGCLGMTRRLVVRSVAGA). Lysine 56 is modified (N6-succinyllysine). Lysine 74 bears the N6-acetyllysine; alternate mark. Lysine 74 carries the post-translational modification N6-succinyllysine; alternate. The short motif at 116–126 (PYANGDPHVGH) is the 'HIGH' region element. An N6-succinyllysine modification is found at lysine 194. N6-acetyllysine is present on lysine 233. At lysine 241 the chain carries N6-acetyllysine; alternate. Position 241 is an N6-succinyllysine; alternate (lysine 241). Lysine 479 and lysine 500 each carry N6-succinyllysine. Residues lysine 664 and lysine 667 each coordinate ATP. A 'KMSKS' region motif is present at residues 664–668 (KMSKS). Residue lysine 725 is modified to N6-acetyllysine. N6-acetyllysine; alternate occurs at positions 775 and 781. Residues lysine 775 and lysine 781 each carry the N6-succinyllysine; alternate modification.

It belongs to the class-I aminoacyl-tRNA synthetase family.

The protein localises to the mitochondrion matrix. It catalyses the reaction tRNA(Ile) + L-isoleucine + ATP = L-isoleucyl-tRNA(Ile) + AMP + diphosphate. Functionally, aminoacyl-tRNA synthetase that catalyzes the specific attachment of isoleucine to its cognate tRNA (tRNA(Ile)). The sequence is that of Isoleucine--tRNA ligase, mitochondrial from Mus musculus (Mouse).